A 183-amino-acid chain; its full sequence is Threonylcarbamoyl-AMP synthase (183 aa).

The 183-residue stretch at 1 to 183 (MNITQIIEKL…LFTNQLVRQG (183 aa)) folds into the YrdC-like domain.

It belongs to the SUA5 family. TsaC subfamily.

It localises to the cytoplasm. The catalysed reaction is L-threonine + hydrogencarbonate + ATP = L-threonylcarbamoyladenylate + diphosphate + H2O. In terms of biological role, required for the formation of a threonylcarbamoyl group on adenosine at position 37 (t(6)A37) in tRNAs that read codons beginning with adenine. Catalyzes the conversion of L-threonine, HCO(3)(-)/CO(2) and ATP to give threonylcarbamoyl-AMP (TC-AMP) as the acyladenylate intermediate, with the release of diphosphate. This Histophilus somni (strain 129Pt) (Haemophilus somnus) protein is Threonylcarbamoyl-AMP synthase.